A 197-amino-acid chain; its full sequence is Ribonuclease HII (197 aa).

The RNase H type-2 domain maps to 14–197 (GIIAGVDEVG…RKNFAPIRIL (184 aa)). A divalent metal cation is bound by residues aspartate 20, glutamate 21, and aspartate 112.

It belongs to the RNase HII family. Requires Mn(2+) as cofactor. Mg(2+) is required as a cofactor.

Its subcellular location is the cytoplasm. It catalyses the reaction Endonucleolytic cleavage to 5'-phosphomonoester.. Functionally, endonuclease that specifically degrades the RNA of RNA-DNA hybrids. This Wolbachia pipientis subsp. Culex pipiens (strain wPip) protein is Ribonuclease HII.